Consider the following 59-residue polypeptide: Cecropin-C type 2 (59 aa).

The signal sequence occupies residues 1 to 23; that stretch reads MNFAKVFVLVAMAVLLLVGQSEA.

This sequence belongs to the cecropin family.

The protein localises to the secreted. In terms of biological role, cecropins have lytic and antibacterial activity against several Gram-positive and Gram-negative bacteria. This Aedes albopictus (Asian tiger mosquito) protein is Cecropin-C type 2 (CECC2).